We begin with the raw amino-acid sequence, 1374 residues long: DNA-directed RNA polymerase subunit beta (1374 aa).

The protein belongs to the RNA polymerase beta chain family. As to quaternary structure, the RNAP catalytic core consists of 2 alpha, 1 beta, 1 beta' and 1 omega subunit. When a sigma factor is associated with the core the holoenzyme is formed, which can initiate transcription.

It carries out the reaction RNA(n) + a ribonucleoside 5'-triphosphate = RNA(n+1) + diphosphate. In terms of biological role, DNA-dependent RNA polymerase catalyzes the transcription of DNA into RNA using the four ribonucleoside triphosphates as substrates. This Rickettsia prowazekii (strain Madrid E) protein is DNA-directed RNA polymerase subunit beta.